A 231-amino-acid polypeptide reads, in one-letter code: Phosphatidylserine decarboxylase proenzyme (231 aa).

The active-site Schiff-base intermediate with substrate; via pyruvic acid is the Ser188. Ser188 carries the post-translational modification Pyruvic acid (Ser); by autocatalysis.

This sequence belongs to the phosphatidylserine decarboxylase family. PSD-A subfamily. In terms of assembly, heterodimer of a large membrane-associated beta subunit and a small pyruvoyl-containing alpha subunit. Pyruvate is required as a cofactor. Is synthesized initially as an inactive proenzyme. Formation of the active enzyme involves a self-maturation process in which the active site pyruvoyl group is generated from an internal serine residue via an autocatalytic post-translational modification. Two non-identical subunits are generated from the proenzyme in this reaction, and the pyruvate is formed at the N-terminus of the alpha chain, which is derived from the carboxyl end of the proenzyme. The post-translation cleavage follows an unusual pathway, termed non-hydrolytic serinolysis, in which the side chain hydroxyl group of the serine supplies its oxygen atom to form the C-terminus of the beta chain, while the remainder of the serine residue undergoes an oxidative deamination to produce ammonia and the pyruvoyl prosthetic group on the alpha chain.

It is found in the cell membrane. It carries out the reaction a 1,2-diacyl-sn-glycero-3-phospho-L-serine + H(+) = a 1,2-diacyl-sn-glycero-3-phosphoethanolamine + CO2. The protein operates within phospholipid metabolism; phosphatidylethanolamine biosynthesis; phosphatidylethanolamine from CDP-diacylglycerol: step 2/2. Its function is as follows. Catalyzes the formation of phosphatidylethanolamine (PtdEtn) from phosphatidylserine (PtdSer). The sequence is that of Phosphatidylserine decarboxylase proenzyme from Rickettsia bellii (strain OSU 85-389).